The primary structure comprises 803 residues: Phenylalanine--tRNA ligase beta subunit (803 aa).

The region spanning 39-151 (SMKFSGIKIG…KNAIIGEDIK (113 aa)) is the tRNA-binding domain. The B5 domain maps to 406–482 (PKKILIKLYK…RFYGFEKIPI (77 aa)). Residues Asp466 and Asp470 each coordinate Mg(2+). The region spanning 707–800 (SDIPFNYRDI…LKKNFLIEIR (94 aa)) is the FDX-ACB domain.

The protein belongs to the phenylalanyl-tRNA synthetase beta subunit family. Type 1 subfamily. As to quaternary structure, tetramer of two alpha and two beta subunits. Mg(2+) serves as cofactor.

The protein localises to the cytoplasm. The catalysed reaction is tRNA(Phe) + L-phenylalanine + ATP = L-phenylalanyl-tRNA(Phe) + AMP + diphosphate + H(+). This is Phenylalanine--tRNA ligase beta subunit from Wigglesworthia glossinidia brevipalpis.